Reading from the N-terminus, the 83-residue chain is Cytochrome b559 subunit alpha (83 aa).

The helical transmembrane segment at 21-35 (VIHSITIPSLFIAGW) threads the bilayer. A heme-binding site is contributed by H23.

Belongs to the PsbE/PsbF family. As to quaternary structure, heterodimer of an alpha subunit and a beta subunit. PSII is composed of 1 copy each of membrane proteins PsbA, PsbB, PsbC, PsbD, PsbE, PsbF, PsbH, PsbI, PsbJ, PsbK, PsbL, PsbM, PsbT, PsbX, PsbY, PsbZ, Psb30/Ycf12, at least 3 peripheral proteins of the oxygen-evolving complex and a large number of cofactors. It forms dimeric complexes. Heme b serves as cofactor.

It localises to the plastid. It is found in the chloroplast thylakoid membrane. Its function is as follows. This b-type cytochrome is tightly associated with the reaction center of photosystem II (PSII). PSII is a light-driven water:plastoquinone oxidoreductase that uses light energy to abstract electrons from H(2)O, generating O(2) and a proton gradient subsequently used for ATP formation. It consists of a core antenna complex that captures photons, and an electron transfer chain that converts photonic excitation into a charge separation. This chain is Cytochrome b559 subunit alpha, found in Chlorella vulgaris (Green alga).